A 289-amino-acid polypeptide reads, in one-letter code: Phytoene synthase (289 aa).

This sequence belongs to the phytoene/squalene synthase family. Requires ATP as cofactor. Mn(2+) is required as a cofactor. The cofactor is Mg(2+).

Its pathway is carotenoid biosynthesis; phytoene biosynthesis. Its function is as follows. Involved in the biosynthesis of carotenoids. Catalyzes the condensation of two molecules of geranylgeranyl diphosphate (GGPP) to give prephytoene diphosphate (PPPP) and the subsequent rearrangement of the cyclopropylcarbinyl intermediate to yield phytoene. The polypeptide is Phytoene synthase (crtB) (Thermus thermophilus (strain ATCC BAA-163 / DSM 7039 / HB27)).